The following is an 88-amino-acid chain: Small ribosomal subunit protein bS16 (88 aa).

This sequence belongs to the bacterial ribosomal protein bS16 family.

The chain is Small ribosomal subunit protein bS16 from Baumannia cicadellinicola subsp. Homalodisca coagulata.